Reading from the N-terminus, the 173-residue chain is Photosystem I assembly protein Ycf3 (173 aa).

3 TPR repeats span residues alanine 35–proline 68, alanine 72–methionine 105, and glycine 120–asparagine 153.

Belongs to the Ycf3 family.

The protein localises to the cellular thylakoid membrane. Functionally, essential for the assembly of the photosystem I (PSI) complex. May act as a chaperone-like factor to guide the assembly of the PSI subunits. The protein is Photosystem I assembly protein Ycf3 of Synechococcus sp. (strain RCC307).